The primary structure comprises 347 residues: Olfactory receptor 2M2 (347 aa).

Over 1–25 (MAWENQTFNSDFILLGIFNHSPPHT) the chain is Extracellular. A glycan (N-linked (GlcNAc...) asparagine) is linked at N5. A helical membrane pass occupies residues 26–49 (FLFFLVLGIFLVAFMGNSVMVLLI). The Cytoplasmic segment spans residues 50–57 (YLDTQLHT). A helical membrane pass occupies residues 58–79 (PMYFLLSQLSLMDLMLICTTVP). The Extracellular segment spans residues 80 to 100 (KMAFNYLSGSKSISMAGCVTQ). Residues C97 and C189 are joined by a disulfide bond. A helical membrane pass occupies residues 101-120 (IFFYISLSGSECFLLAVMAY). Topologically, residues 121–139 (DRYIAICHPLRYTNLMNPK) are cytoplasmic. A helical transmembrane segment spans residues 140-158 (ICGLMATFSWILGSTDGII). Over 159-195 (DAVATFSFSFCGSREIAHFFCEFPSLLILSCNDTSIF) the chain is Extracellular. The N-linked (GlcNAc...) asparagine glycan is linked to N190. Residues 196–219 (EEVIFICCIVMLVFPVAIIIASYA) form a helical membrane-spanning segment. Topologically, residues 220–236 (RVILAVIHMGSGEGRCK) are cytoplasmic. The helical transmembrane segment at 237 to 259 (AFTTCSSHLMVVGMYYGAALFMY) threads the bilayer. At 260–272 (IRPTSDHSPTQDK) the chain is on the extracellular side. A helical membrane pass occupies residues 273 to 292 (MVSVFYTILTPMLNPLIYSL). Topologically, residues 293-347 (RNKEVTRAFMKILGKGKSESELPHKLYVLLFAKFFFLISIFFYDVKILALIMYIA) are cytoplasmic.

The protein belongs to the G-protein coupled receptor 1 family.

It localises to the cell membrane. Functionally, odorant receptor. The chain is Olfactory receptor 2M2 (OR2M2) from Homo sapiens (Human).